A 185-amino-acid polypeptide reads, in one-letter code: MANAIIEKANQRFEQSFQSLSREYASIRAGRANASLLDRIQVEYYGVPTPLNQLASITVPEARVLLISPFDKSSIKDIERAINASDLGITPANDGSVIRLVIPALTEETRKELAKEVKKVGENQKIAIRNIRRDAMDEAKKQEKNKEITEDELKALEKDIQKATDQAIKHIDGMTSEKEKELLTV.

Belongs to the RRF family.

The protein localises to the cytoplasm. In terms of biological role, responsible for the release of ribosomes from messenger RNA at the termination of protein biosynthesis. May increase the efficiency of translation by recycling ribosomes from one round of translation to another. The protein is Ribosome-recycling factor of Streptococcus uberis (strain ATCC BAA-854 / 0140J).